Consider the following 290-residue polypeptide: MKLLDGKKCAESLVADIARKVAGYEESGLRKPHMTVILVGEHAPSESYVKSKIKSCGNAGFEGTLLRFPDTITEAELLEKIRGINADPTTDGLIVQLPLPRHINQQHIINAIAPEKDIDGFHPTNFGRMTLGQKAFRPATAYGICKLLQFYEIPVWGKHCVVIGRSNIVGKPISIMLSNDFDIGNATVTLTHIETPRELLLDETRRADIVIVAVGIPGFVTEDMVKEGVVVIDVGINRLEDGKIVGDVDFENVKKKCSWITPVPGGVGRMTVAALMINTLMAYQNNFDLV.

Residues 164-166 (GRS), isoleucine 193, and isoleucine 236 each bind NADP(+).

Belongs to the tetrahydrofolate dehydrogenase/cyclohydrolase family. Homodimer.

The catalysed reaction is (6R)-5,10-methylene-5,6,7,8-tetrahydrofolate + NADP(+) = (6R)-5,10-methenyltetrahydrofolate + NADPH. It carries out the reaction (6R)-5,10-methenyltetrahydrofolate + H2O = (6R)-10-formyltetrahydrofolate + H(+). It participates in one-carbon metabolism; tetrahydrofolate interconversion. Functionally, catalyzes the oxidation of 5,10-methylenetetrahydrofolate to 5,10-methenyltetrahydrofolate and then the hydrolysis of 5,10-methenyltetrahydrofolate to 10-formyltetrahydrofolate. This chain is Bifunctional protein FolD 1, found in Geobacter metallireducens (strain ATCC 53774 / DSM 7210 / GS-15).